A 455-amino-acid chain; its full sequence is C4-dicarboxylate transport protein (455 aa).

Helical transmembrane passes span 20–40 (HLYF…HFYP), 59–79 (MIIA…MGTL), 91–111 (GYFL…ANVI), 160–180 (GNIL…ILIG), 209–229 (PIGA…ASVV), 231–251 (LATL…VVLG), 344–364 (LLLV…AGFI), and 367–387 (AATL…ILGV).

This sequence belongs to the dicarboxylate/amino acid:cation symporter (DAACS) (TC 2.A.23) family.

The protein resides in the cell inner membrane. Responsible for the transport of dicarboxylates such as succinate, fumarate, and malate from the periplasm across the membrane. The protein is C4-dicarboxylate transport protein of Paracoccus denitrificans (strain Pd 1222).